The chain runs to 510 residues: Maturase K (510 aa).

This sequence belongs to the intron maturase 2 family. MatK subfamily.

The protein localises to the plastid. In terms of biological role, usually encoded in the trnK tRNA gene intron. Probably assists in splicing its own and other chloroplast group II introns. This chain is Maturase K, found in Aneura mirabilis (Parasitic liverwort).